The sequence spans 515 residues: Histidine ammonia-lyase (515 aa).

Positions 145–147 (ASG) form a cross-link, 5-imidazolinone (Ala-Gly). At S146 the chain carries 2,3-didehydroalanine (Ser).

It belongs to the PAL/histidase family. Contains an active site 4-methylidene-imidazol-5-one (MIO), which is formed autocatalytically by cyclization and dehydration of residues Ala-Ser-Gly.

Its subcellular location is the cytoplasm. It carries out the reaction L-histidine = trans-urocanate + NH4(+). It functions in the pathway amino-acid degradation; L-histidine degradation into L-glutamate; N-formimidoyl-L-glutamate from L-histidine: step 1/3. This is Histidine ammonia-lyase from Gluconacetobacter diazotrophicus (strain ATCC 49037 / DSM 5601 / CCUG 37298 / CIP 103539 / LMG 7603 / PAl5).